The primary structure comprises 116 residues: Large ribosomal subunit protein uL18 (116 aa).

The protein belongs to the universal ribosomal protein uL18 family. As to quaternary structure, part of the 50S ribosomal subunit; part of the 5S rRNA/L5/L18/L25 subcomplex. Contacts the 5S and 23S rRNAs.

Its function is as follows. This is one of the proteins that bind and probably mediate the attachment of the 5S RNA into the large ribosomal subunit, where it forms part of the central protuberance. This chain is Large ribosomal subunit protein uL18, found in Acinetobacter baylyi (strain ATCC 33305 / BD413 / ADP1).